Here is a 152-residue protein sequence, read N- to C-terminus: MIYYVIALFVIAIDQISKWLIVKNMELGTSIPIIDNVLYITSHRNRGAAWGILENKMWFFYIITVIFVAFIVFYMKKYAKTDKLLGISLGLILGGAIGNFIDRVFRQEVVDFIHVYIFSYNYPVFNIADSALCIGVVLIIIQTVLEGKKAKE.

The next 2 helical transmembrane spans lie at 55 to 75 (NKMW…VFYM) and 85 to 105 (LGIS…DRVF). Active-site residues include Asp111 and Asp129. Residues 124 to 144 (VFNIADSALCIGVVLIIIQTV) form a helical membrane-spanning segment.

Belongs to the peptidase A8 family.

It localises to the cell membrane. The enzyme catalyses Release of signal peptides from bacterial membrane prolipoproteins. Hydrolyzes -Xaa-Yaa-Zaa-|-(S,diacylglyceryl)Cys-, in which Xaa is hydrophobic (preferably Leu), and Yaa (Ala or Ser) and Zaa (Gly or Ala) have small, neutral side chains.. It participates in protein modification; lipoprotein biosynthesis (signal peptide cleavage). Its function is as follows. This protein specifically catalyzes the removal of signal peptides from prolipoproteins. The polypeptide is Lipoprotein signal peptidase (Bacillus mycoides (strain KBAB4) (Bacillus weihenstephanensis)).